Consider the following 185-residue polypeptide: Elongation factor P (185 aa).

Belongs to the elongation factor P family.

Its subcellular location is the cytoplasm. The protein operates within protein biosynthesis; polypeptide chain elongation. Its function is as follows. Involved in peptide bond synthesis. Stimulates efficient translation and peptide-bond synthesis on native or reconstituted 70S ribosomes in vitro. Probably functions indirectly by altering the affinity of the ribosome for aminoacyl-tRNA, thus increasing their reactivity as acceptors for peptidyl transferase. This is Elongation factor P from Trichormus variabilis (strain ATCC 29413 / PCC 7937) (Anabaena variabilis).